A 1114-amino-acid chain; its full sequence is Translation initiation factor IF-2 (1114 aa).

2 disordered regions span residues 69–102 (SIKKDNFKQNKSPSISSKKETPLKDNSNKKPLLI) and 181–507 (INNN…KRRA). Residues 85 to 96 (SKKETPLKDNSN) show a composition bias toward basic and acidic residues. Over residues 181–198 (INNNVKSNESSQNISSAG) the composition is skewed to polar residues. Residues 240 to 251 (INPNKQNNKQNI) show a composition bias toward low complexity. Residues 252 to 261 (AFKQTGSNRI) show a composition bias toward polar residues. 3 stretches are compositionally biased toward low complexity: residues 262-278 (GSPNRPGMPNNRPGLRN), 290-309 (NRQGNPNRPGMPNNRPGLRN), and 321-337 (NRQGNPNRPGMPNNRPG). The span at 365 to 375 (NSEKDNKDKNN) shows a compositional bias: basic and acidic residues. Residues 376 to 385 (NAKQNINGPN) are compositionally biased toward low complexity. Over residues 417–431 (GKTDWDDSAKLEALR) the composition is skewed to basic and acidic residues. The segment covering 489–505 (KQFKKKKKETTRQRQKR) has biased composition (basic residues). In terms of domain architecture, tr-type G spans 606 to 778 (RRPPVITVMG…ILLVSEVEDL (173 aa)). Residues 615–622 (GHVDHGKT) are G1. A GTP-binding site is contributed by 615 to 622 (GHVDHGKT). Residues 640-644 (GITQH) are G2. Positions 665–668 (DTPG) are G3. GTP-binding positions include 665-669 (DTPGH) and 719-722 (NKID). Positions 719–722 (NKID) are G4. Residues 755-757 (SAI) form a G5 region.

The protein belongs to the TRAFAC class translation factor GTPase superfamily. Classic translation factor GTPase family. IF-2 subfamily.

Its subcellular location is the cytoplasm. In terms of biological role, one of the essential components for the initiation of protein synthesis. Protects formylmethionyl-tRNA from spontaneous hydrolysis and promotes its binding to the 30S ribosomal subunits. Also involved in the hydrolysis of GTP during the formation of the 70S ribosomal complex. The protein is Translation initiation factor IF-2 of Prochlorococcus marinus (strain MIT 9301).